The chain runs to 50 residues: Large ribosomal subunit protein bL33B (50 aa).

This sequence belongs to the bacterial ribosomal protein bL33 family.

This is Large ribosomal subunit protein bL33B from Mycoplasmopsis agalactiae (strain NCTC 10123 / CIP 59.7 / PG2) (Mycoplasma agalactiae).